We begin with the raw amino-acid sequence, 101 residues long: uncharacterized protein (101 aa).

2 helical membrane passes run 35-55 (LWTM…LIII) and 66-86 (FLFF…TLLF).

The protein resides in the membrane. This is an uncharacterized protein from Saccharomyces cerevisiae (strain ATCC 204508 / S288c) (Baker's yeast).